A 564-amino-acid polypeptide reads, in one-letter code: MKVSQFFLATVKETPADAVLASHQLMIRAGMLRKLASGLYTWLPLGLRVLQKVADVVREEMNRAGALELLMPIVQPASLWQESGRWEAYGAELLRIMDRHQNGFCFGPTHEEVITDIARQELKSYKQLPLNFYQIQTKFRDEIRPRFGVMRSREFLMKDAYSFDLDEKGMQAAYEKMFDAYRRIFTRLGLNFRAVLADTGAIGGDYSHEFQVLADVGEDTVVYSDESDYAANIEKAAAQAPQGERVKPVAEMKKIATPGVRTIKQLADKANILPEKGVKTLIVKGDESSLIALILRGDHELNDVKAQHLPGVAFPLQFADEKEIREAIGCGPGSLGPVNLPIPFIVDRDAAQLVDFSCGANEDDFHWINVNWERDVPLGSVADIRKVVEGDISPDGKGRLRFARGIEVGQVFQLGDKYSRKMNATVVDELGKSRYLQMGCYGIGVSRTVAAAIEQNHDERGIIWPMPMAPFFIALVPVNMHKSYRVREACEKLYNELIDAGYEVLWDDRKERPGVMFADMDLIGIPHRLVISESGLDRGIVEYKARKSKEAENVSLENVLSVFR.

Belongs to the class-II aminoacyl-tRNA synthetase family. ProS type 1 subfamily. As to quaternary structure, homodimer.

The protein localises to the cytoplasm. It catalyses the reaction tRNA(Pro) + L-proline + ATP = L-prolyl-tRNA(Pro) + AMP + diphosphate. In terms of biological role, catalyzes the attachment of proline to tRNA(Pro) in a two-step reaction: proline is first activated by ATP to form Pro-AMP and then transferred to the acceptor end of tRNA(Pro). As ProRS can inadvertently accommodate and process non-cognate amino acids such as alanine and cysteine, to avoid such errors it has two additional distinct editing activities against alanine. One activity is designated as 'pretransfer' editing and involves the tRNA(Pro)-independent hydrolysis of activated Ala-AMP. The other activity is designated 'posttransfer' editing and involves deacylation of mischarged Ala-tRNA(Pro). The misacylated Cys-tRNA(Pro) is not edited by ProRS. This chain is Proline--tRNA ligase, found in Coxiella burnetii (strain RSA 331 / Henzerling II).